The following is a 267-amino-acid chain: Cyclin-C (267 aa).

Residues 48–151 (IQVLGEQLKL…LLENLDCCLI (104 aa)) form the Cyclin N-terminal domain.

This sequence belongs to the cyclin family. Cyclin C subfamily. In terms of assembly, component of the Cdk8 module of the Mediator complex.

It localises to the nucleus. Its function is as follows. Component of the Mediator complex, a coactivator involved in regulated gene transcription of nearly all RNA polymerase II-dependent genes. Mediator functions as a bridge to convey information from gene-specific regulatory proteins to the basal RNA polymerase II transcription machinery. Mediator is recruited to promoters by direct interactions with regulatory proteins and serves as a scaffold for the assembly of a functional preinitiation complex with RNA polymerase II and the general transcription factors. Binds to and activates cyclin-dependent kinase Cdk8 that phosphorylates the CTD (C-terminal domain) of the large subunit of RNA polymerase II (RNAp II), which may inhibit the formation of a transcription initiation complex. The sequence is that of Cyclin-C (CycC) from Drosophila pseudoobscura pseudoobscura (Fruit fly).